The following is a 403-amino-acid chain: Cytochrome P450-SU2 (403 aa).

Residues 1–24 (MTTAERTAPPDALTVPASRAPGCP) are disordered. Heme is bound at residue C352.

It belongs to the cytochrome P450 family. Heme serves as cofactor.

Functionally, metabolism of a number of sulfonylurea herbicides. The polypeptide is Cytochrome P450-SU2 (cyp105B1) (Streptomyces griseolus).